A 79-amino-acid polypeptide reads, in one-letter code: uncharacterized protein (79 aa).

The N-terminal stretch at 1-19 is a signal peptide; sequence MKYVALAFVLSLVILQISA. The tract at residues 52–71 is disordered; that stretch reads RGRKSRTQSGRNQGKSTSDS. The segment covering 58–71 has biased composition (polar residues); the sequence is TQSGRNQGKSTSDS.

As to expression, nacreous layer of shell (at protein level). Expressed primarily in the mantle with highest level in the mantle pallium and lower level in the mantle edge.

Its subcellular location is the secreted. This is an uncharacterized protein from Margaritifera margaritifera (Freshwater pearl mussel).